The chain runs to 473 residues: tRNA modification GTPase MnmE (473 aa).

The (6S)-5-formyl-5,6,7,8-tetrahydrofolate site is built by arginine 30, glutamate 95, and arginine 134. One can recognise a TrmE-type G domain in the interval 230 to 394; that stretch reads GVSTVIAGRP…LKLLMASMVE (165 aa). GTP-binding positions include 240–245, 259–265, and 284–287; these read NAGKST, SHMPGTT, and DTAG. Mg(2+) contacts are provided by serine 244 and threonine 265. (6S)-5-formyl-5,6,7,8-tetrahydrofolate is bound at residue lysine 473.

It belongs to the TRAFAC class TrmE-Era-EngA-EngB-Septin-like GTPase superfamily. TrmE GTPase family. As to quaternary structure, homodimer. Heterotetramer of two MnmE and two MnmG subunits. The cofactor is K(+).

The protein localises to the cytoplasm. Exhibits a very high intrinsic GTPase hydrolysis rate. Involved in the addition of a carboxymethylaminomethyl (cmnm) group at the wobble position (U34) of certain tRNAs, forming tRNA-cmnm(5)s(2)U34. The protein is tRNA modification GTPase MnmE of Chlorobium luteolum (strain DSM 273 / BCRC 81028 / 2530) (Pelodictyon luteolum).